The sequence spans 158 residues: N5-carboxyaminoimidazole ribonucleotide mutase (158 aa).

Residues Ser10, Asp13, and Arg40 each coordinate substrate.

This sequence belongs to the AIR carboxylase family. Class I subfamily.

It catalyses the reaction 5-carboxyamino-1-(5-phospho-D-ribosyl)imidazole + H(+) = 5-amino-1-(5-phospho-D-ribosyl)imidazole-4-carboxylate. It functions in the pathway purine metabolism; IMP biosynthesis via de novo pathway; 5-amino-1-(5-phospho-D-ribosyl)imidazole-4-carboxylate from 5-amino-1-(5-phospho-D-ribosyl)imidazole (N5-CAIR route): step 2/2. Its function is as follows. Catalyzes the conversion of N5-carboxyaminoimidazole ribonucleotide (N5-CAIR) to 4-carboxy-5-aminoimidazole ribonucleotide (CAIR). The sequence is that of N5-carboxyaminoimidazole ribonucleotide mutase from Saccharolobus solfataricus (strain ATCC 35092 / DSM 1617 / JCM 11322 / P2) (Sulfolobus solfataricus).